Consider the following 308-residue polypeptide: Endonuclease G, mitochondrial (308 aa).

The active-site Proton acceptor is the histidine 148. A Mg(2+)-binding site is contributed by asparagine 180.

This sequence belongs to the DNA/RNA non-specific endonuclease family. In terms of assembly, homodimer; disulfide-linked. Interacts with crn-5, crn-4, crn-1 and cyn-13. Requires Mg(2+) as cofactor.

The protein localises to the mitochondrion. Its function is as follows. Endonuclease important for programmed cell death; it mediates apoptotic DNA fragmentation. This Caenorhabditis elegans protein is Endonuclease G, mitochondrial (cps-6).